The chain runs to 325 residues: E3 ubiquitin-protein ligase EL5 (325 aa).

Residues 1-29 form a disordered region; sequence MVRGVEQGGPAMDESSSSSSPSPVSAPAG. Over residues 15–28 the composition is skewed to low complexity; the sequence is SSSSSSPSPVSAPA. Residues 38–58 traverse the membrane as a helical segment; the sequence is IATVAAVLIVFAALTLAFVLL. The interval 70–105 is disordered; it reads TTTSTSGRGRRPRPRRRSGSGGDGGTGGGVDPEVLR. The span at 77-87 shows a compositional bias: basic residues; sequence RGRRPRPRRRS. Positions 88 to 99 are enriched in gly residues; sequence GSGGDGGTGGGV. The segment at 134–176 adopts an RING-type; atypical zinc-finger fold; that stretch reads CAVCLAELEDGEEARFLPRCGHGFHAECVDMWLGSHSTCPLCR. 2 disordered regions span residues 267–289 and 303–325; these read GAAG…GDVE and AATP…HVRN. The span at 268-281 shows a compositional bias: low complexity; it reads AAGSTSSCSCATGG.

It is found in the cell membrane. It carries out the reaction S-ubiquitinyl-[E2 ubiquitin-conjugating enzyme]-L-cysteine + [acceptor protein]-L-lysine = [E2 ubiquitin-conjugating enzyme]-L-cysteine + N(6)-ubiquitinyl-[acceptor protein]-L-lysine.. It participates in protein modification; protein ubiquitination. In terms of biological role, functions as an E3 ubiquitin-protein ligase in cooperation with the E2 ubiquitin conjugating enzymes UBC5A and UBC5B. Involved in root development. Required for the maintenance of cell viability after the initiation of root primordial formation. May mediate the degradation of cytotoxic proteins produced in root cells after the actions of auxin, cytokinin and jasmonic acid. Mediates 'Lys-48'-linked polyubiquitination of MBP in vitro. The protein is E3 ubiquitin-protein ligase EL5 (EL5.1) of Oryza sativa subsp. japonica (Rice).